Consider the following 543-residue polypeptide: Formin-binding protein 1-like (543 aa).

The region spanning 1–263 (MSWGTELWDQ…AAKSVDERRD (263 aa)) is the F-BAR domain. Coiled-coil stretches lie at residues 66–258 (FTSC…AKSV) and 334–426 (LEDF…QRSE). Residues 339–416 (HLPPEQRRKR…IHKNEGWLSE (78 aa)) enclose the REM-1 domain. Residues 424–467 (RSERRHSAEANHLVAQGRESPEGSYTEDANQEGRVQPQHHAHPE) are disordered. The region spanning 479 to 540 (PAIGHCKSLY…PTSYIEITLE (62 aa)) is the SH3 domain.

Belongs to the FNBP1 family. As to quaternary structure, homodimerizes, the dimers can polymerize end-to-end to form filamentous structures. Interacts with GTP-bound cdc42 and wasl/n-wasp.

It is found in the cytoplasm. The protein resides in the cytoskeleton. The protein localises to the cell cortex. Its subcellular location is the cytoplasmic vesicle. It localises to the cell membrane. Its function is as follows. Required to coordinate membrane tubulation with reorganization of the actin cytoskeleton during endocytosis. Essential for autophagy of intracellular bacterial pathogens. Promotes cdc42-induced actin polymerization by activating the wasl-waspip complex, the predominant form of wasl/n-wasp in cells. This Xenopus laevis (African clawed frog) protein is Formin-binding protein 1-like (fnbp1l).